An 842-amino-acid polypeptide reads, in one-letter code: Protein translocase subunit SecA (842 aa).

Residues Gln85, 103–107, and Asp493 each bind ATP; that span reads GEGKT. Cys825, Cys827, Cys836, and His837 together coordinate Zn(2+).

This sequence belongs to the SecA family. As to quaternary structure, monomer and homodimer. Part of the essential Sec protein translocation apparatus which comprises SecA, SecYEG and auxiliary proteins SecDF. Other proteins may also be involved. Zn(2+) is required as a cofactor.

It localises to the cell membrane. The protein localises to the cytoplasm. The enzyme catalyses ATP + H2O + cellular proteinSide 1 = ADP + phosphate + cellular proteinSide 2.. Part of the Sec protein translocase complex. Interacts with the SecYEG preprotein conducting channel. Has a central role in coupling the hydrolysis of ATP to the transfer of proteins into and across the cell membrane, serving as an ATP-driven molecular motor driving the stepwise translocation of polypeptide chains across the membrane. This chain is Protein translocase subunit SecA, found in Streptococcus equi subsp. zooepidemicus (strain H70).